Reading from the N-terminus, the 465-residue chain is Probable dipeptidase A (465 aa).

The active site involves cysteine 3.

It belongs to the peptidase C69 family.

The enzyme catalyses an L-aminoacyl-L-amino acid + H2O = 2 an L-alpha-amino acid. The sequence is that of Probable dipeptidase A (pepDA) from Streptococcus pyogenes serotype M3 (strain SSI-1).